The following is a 440-amino-acid chain: Xylose isomerase (440 aa).

Residues His-100 and Asp-103 contribute to the active site. Mg(2+) contacts are provided by Glu-231, Glu-267, His-270, Asp-295, Asp-306, Asp-308, and Asp-338.

Belongs to the xylose isomerase family. In terms of assembly, homotetramer. The cofactor is Mg(2+).

The protein localises to the cytoplasm. The catalysed reaction is alpha-D-xylose = alpha-D-xylulofuranose. The protein is Xylose isomerase of Burkholderia cenocepacia (strain HI2424).